The sequence spans 83 residues: Protein YciN (83 aa).

In Escherichia coli O157:H7, this protein is Protein YciN (yciN).